The primary structure comprises 330 residues: mRNA-capping enzyme (330 aa).

The active-site N6-GMP-lysine intermediate is K82.

This sequence belongs to the eukaryotic GTase family. In terms of assembly, monomer. Requires Mg(2+) as cofactor. The cofactor is Mn(2+).

It catalyses the reaction a 5'-end diphospho-ribonucleoside in mRNA + GTP + H(+) = a 5'-end (5'-triphosphoguanosine)-ribonucleoside in mRNA + diphosphate. Its function is as follows. mRNA capping. Transfers a GMP cap onto the end of mRNA that terminates with a 5'-diphosphate tail. The sequence is that of mRNA-capping enzyme from Chlorella (PBCV-1).